The chain runs to 73 residues: MTVDPEELRKMETGDLLKKLDELKLELIKLRVQSRMGTLKNTASIRNTRKDIARILTVLSEKKKVKREKVENK.

It belongs to the universal ribosomal protein uL29 family.

The sequence is that of Large ribosomal subunit protein uL29 (rpl29) from Saccharolobus solfataricus (strain ATCC 35092 / DSM 1617 / JCM 11322 / P2) (Sulfolobus solfataricus).